Here is a 279-residue protein sequence, read N- to C-terminus: Urease accessory protein UreD (279 aa).

It belongs to the UreD family. As to quaternary structure, ureD, UreF and UreG form a complex that acts as a GTP-hydrolysis-dependent molecular chaperone, activating the urease apoprotein by helping to assemble the nickel containing metallocenter of UreC. The UreE protein probably delivers the nickel.

The protein resides in the cytoplasm. Its function is as follows. Required for maturation of urease via the functional incorporation of the urease nickel metallocenter. The protein is Urease accessory protein UreD of Nitrosospira multiformis (strain ATCC 25196 / NCIMB 11849 / C 71).